Consider the following 314-residue polypeptide: Mitochondrial 2-oxoglutarate/malate carrier protein (314 aa).

A2 is subject to N-acetylalanine. Position 6 is a phosphoserine (S6). Solcar repeat units follow at residues 23 to 108 (VKFL…LFER), 117 to 208 (PGFL…SKQF), and 217 to 306 (DNIL…MNKA). A helical membrane pass occupies residues 24 to 42 (KFLFGGLAGMGATVFVQPL). K57 is modified (N6-succinyllysine). Position 73 is an N6-acetyllysine (K73). A helical transmembrane segment spans residues 83 to 101 (GLSAGLLRQATYTTTRLGI). Y102 carries the phosphotyrosine modification. 3 consecutive transmembrane segments (helical) span residues 119-140 (FLLKALIGMTAGATGAFVGPPA), 183-202 (GCIPTMARAVVVNAAQLASY), and 222-240 (HFCAIMISGLVTTAASMPV). The residue at position 256 (K256) is an N6-acetyllysine. Residues 281 to 300 (GFTPYYARLGPHTVLTFIFL) form a helical membrane-spanning segment.

Belongs to the mitochondrial carrier (TC 2.A.29) family. In terms of assembly, interacts with SMIM26. Expressed in liver, heart and brain.

It localises to the mitochondrion inner membrane. The catalysed reaction is (S)-malate(in) + 2-oxoglutarate(out) = (S)-malate(out) + 2-oxoglutarate(in). The enzyme catalyses malonate(in) + 2-oxoglutarate(out) = malonate(out) + 2-oxoglutarate(in). It catalyses the reaction succinate(in) + 2-oxoglutarate(out) = succinate(out) + 2-oxoglutarate(in). It carries out the reaction maleate(in) + 2-oxoglutarate(out) = maleate(out) + 2-oxoglutarate(in). The catalysed reaction is oxaloacetate(in) + 2-oxoglutarate(out) = oxaloacetate(out) + 2-oxoglutarate(in). Functionally, catalyzes the transport of 2-oxoglutarate (alpha-oxoglutarate) across the inner mitochondrial membrane in an electroneutral exchange for malate. Can also exchange 2-oxoglutarate for other dicarboxylic acids such as malonate, succinate, maleate and oxaloacetate, although with lower affinity. Contributes to several metabolic processes, including the malate-aspartate shuttle, the oxoglutarate/isocitrate shuttle, in gluconeogenesis from lactate, and in nitrogen metabolism. Maintains mitochondrial fusion and fission events, and the organization and morphology of cristae. Involved in the regulation of apoptosis. Helps protect from cytotoxic-induced apoptosis by modulating glutathione levels in mitochondria. This Rattus norvegicus (Rat) protein is Mitochondrial 2-oxoglutarate/malate carrier protein (Slc25a11).